Reading from the N-terminus, the 68-residue chain is Long neurotoxin 1 (68 aa).

5 cysteine pairs are disulfide-bonded: Cys-3–Cys-20, Cys-13–Cys-41, Cys-26–Cys-30, Cys-45–Cys-56, and Cys-57–Cys-62.

This sequence belongs to the three-finger toxin family. Long-chain subfamily. Type II alpha-neurotoxin sub-subfamily. In terms of tissue distribution, expressed by the venom gland.

It localises to the secreted. Binds with high affinity to muscular (alpha-1/CHRNA1) and neuronal (alpha-7/CHRNA7) nicotinic acetylcholine receptor (nAChR) and inhibits acetylcholine from binding to the receptor, thereby impairing neuromuscular and neuronal transmission. The protein is Long neurotoxin 1 of Aspidelaps scutatus (Shield-nose snake).